The primary structure comprises 277 residues: Digeranylgeranylglyceryl phosphate synthase (277 aa).

8 helical membrane passes run 16–36 (LLAG…LPEL), 40–60 (ILVF…NDYF), 83–105 (AALW…INIW), 107–124 (FLLA…AWKL), 146–166 (GAIA…AFLV), 202–222 (VGAL…KAGI), 224–244 (LGYL…FLIL), and 256–276 (QILL…ASLV).

This sequence belongs to the UbiA prenyltransferase family. DGGGP synthase subfamily. Mg(2+) is required as a cofactor.

It localises to the cell membrane. It catalyses the reaction sn-3-O-(geranylgeranyl)glycerol 1-phosphate + (2E,6E,10E)-geranylgeranyl diphosphate = 2,3-bis-O-(geranylgeranyl)-sn-glycerol 1-phosphate + diphosphate. The protein operates within membrane lipid metabolism; glycerophospholipid metabolism. Its function is as follows. Prenyltransferase that catalyzes the transfer of the geranylgeranyl moiety of geranylgeranyl diphosphate (GGPP) to the C2 hydroxyl of (S)-3-O-geranylgeranylglyceryl phosphate (GGGP). This reaction is the second ether-bond-formation step in the biosynthesis of archaeal membrane lipids. The sequence is that of Digeranylgeranylglyceryl phosphate synthase from Thermococcus kodakarensis (strain ATCC BAA-918 / JCM 12380 / KOD1) (Pyrococcus kodakaraensis (strain KOD1)).